Consider the following 663-residue polypeptide: Probable methylenetetrahydrofolate reductase (NADPH) (663 aa).

Glutamate 76 functions as the Proton donor/acceptor in the catalytic mechanism. NAD(+) is bound by residues 76-81 (EFFPPR) and 107-108 (TW). At threonine 107 the chain carries Phosphothreonine. FAD contacts are provided by residues 107–108 (TW), histidine 141, 171–173 (RGD), 187–188 (RA), tyrosine 210, 214–217 (HPQA), aspartate 223, and lysine 230. Aspartate 173 lines the substrate pocket. Substrate contacts are provided by glutamine 241, tyrosine 334, and arginine 338. Serine 408 is subject to Phosphoserine. At threonine 465 the chain carries Phosphothreonine. S-adenosyl-L-methionine contacts are provided by residues 477–480 (QPET), 497–501 (TVNSQ), threonine 578, and threonine 591.

It belongs to the methylenetetrahydrofolate reductase family. FAD serves as cofactor.

It carries out the reaction (6S)-5-methyl-5,6,7,8-tetrahydrofolate + NADP(+) = (6R)-5,10-methylene-5,6,7,8-tetrahydrofolate + NADPH + H(+). It functions in the pathway one-carbon metabolism; tetrahydrofolate interconversion. This is Probable methylenetetrahydrofolate reductase (NADPH) from Caenorhabditis elegans.